A 1157-amino-acid polypeptide reads, in one-letter code: Peroxisomal ATPase PEX1 (1157 aa).

Disordered regions lie at residues 187–221 and 1135–1157; these read SISS…NNGE and SGRD…STLM. The segment covering 205-217 has biased composition (low complexity); sequence SSTSTATGRRSVT.

Belongs to the AAA ATPase family. As to quaternary structure, interacts with PEX6; forming the PEX1-PEX6 AAA ATPase complex, which is composed of a heterohexamer formed by a trimer of PEX1-PEX6 dimers.

Its subcellular location is the membrane. It catalyses the reaction ATP + H2O = ADP + phosphate + H(+). Functionally, component of the PEX1-PEX6 AAA ATPase complex involved in peroxisome biosynthesis. The complex acts as a protein dislocase complex that mediates the ATP-dependent extraction of the PEX5 receptor from peroxisomal membranes, an essential step for PEX5 recycling. Specifically recognizes PEX5 monoubiquitinated at 'Cys-6', and pulls it out of the peroxisome lumen through the PEX2-PEX10-PEX12 retrotranslocation channel. Extraction by the PEX1-PEX6 AAA ATPase complex is accompanied by unfolding of the TPR repeats and release of bound cargo from PEX5. This Komagataella pastoris (Yeast) protein is Peroxisomal ATPase PEX1.